We begin with the raw amino-acid sequence, 932 residues long: Protocadherin gamma-A12 (932 aa).

Residues Met-1–Thr-29 form the signal peptide. Cadherin domains are found at residues Gln-30–Phe-133, Arg-134–Phe-242, Ala-243–Val-347, Val-348–Phe-452, Pro-453–Ile-562, and Asp-570–Asn-683. Residues Gln-30 to Tyr-692 lie on the Extracellular side of the membrane. Residues Asn-265, Asn-419, and Asn-545 are each glycosylated (N-linked (GlcNAc...) asparagine). The helical transmembrane segment at Leu-693 to Ala-713 threads the bilayer. Over Leu-714 to Lys-932 the chain is Cytoplasmic. Disordered stretches follow at residues Ser-803–Asn-841 and Ala-902–Lys-932. The segment covering Trp-816–Asn-841 has biased composition (polar residues). Residues Asn-922–Lys-932 are compositionally biased toward basic residues.

It localises to the cell membrane. Its function is as follows. Potential calcium-dependent cell-adhesion protein. May be involved in the establishment and maintenance of specific neuronal connections in the brain. In Homo sapiens (Human), this protein is Protocadherin gamma-A12 (PCDHGA12).